A 241-amino-acid chain; its full sequence is uncharacterized protein (241 aa).

7 consecutive transmembrane segments (helical) span residues Ile-12–Leu-32, Leu-39–Phe-59, Val-89–Thr-109, Tyr-117–Val-137, Leu-152–Leu-172, Ile-180–Tyr-200, and Tyr-215–Ile-235.

Belongs to the mimivirus L68/R809 family.

It is found in the membrane. This is an uncharacterized protein from Acanthamoeba polyphaga mimivirus (APMV).